A 135-amino-acid polypeptide reads, in one-letter code: Galectin-1 (135 aa).

A2 carries the post-translational modification N-acetylalanine. Residues 4-135 (GLVASNLNLK…DFKIKCVAFE (132 aa)) form the Galectin domain. N6-acetyllysine occurs at positions 13, 19, and 29. A Phosphoserine modification is found at S30. Residues 45–49 (HFNPR), H53, N62, and 69–72 (WGTE) each bind a beta-D-galactoside. The residue at position 108 (K108) is an N6-acetyllysine; alternate. K108 carries the N6-succinyllysine; alternate modification. K128 bears the N6-acetyllysine mark.

As to quaternary structure, homodimer. Binds LGALS3BP. Interacts with CD2, CD3, CD4, CD6, CD7, CD43, ALCAM and CD45. Interacts with laminin (via poly-N-acetyllactosamine). Interacts with SUSD2. Interacts with cargo receptor TMED10; the interaction mediates the translocation from the cytoplasm into the ERGIC (endoplasmic reticulum-Golgi intermediate compartment) and thereby secretion. Interacts with CD69.

The protein resides in the secreted. Its subcellular location is the extracellular space. It localises to the extracellular matrix. It is found in the cytoplasm. Functionally, lectin that binds beta-galactoside and a wide array of complex carbohydrates. Plays a role in regulating apoptosis, cell proliferation and cell differentiation. Inhibits CD45 protein phosphatase activity and therefore the dephosphorylation of Lyn kinase. Strong inducer of T-cell apoptosis. Plays a negative role in Th17 cell differentiation via activation of the receptor CD69. In Mus musculus (Mouse), this protein is Galectin-1 (Lgals1).